Reading from the N-terminus, the 197-residue chain is GTP cyclohydrolase-2 (197 aa).

Residue 50 to 54 (RIHSE) participates in GTP binding. Zn(2+) contacts are provided by C55, C66, and C68. GTP is bound by residues Q71, 93–95 (EGR), and T115. Catalysis depends on D127, which acts as the Proton acceptor. The active-site Nucleophile is the R129. Positions 150 and 155 each coordinate GTP.

It belongs to the GTP cyclohydrolase II family. Zn(2+) is required as a cofactor.

It carries out the reaction GTP + 4 H2O = 2,5-diamino-6-hydroxy-4-(5-phosphoribosylamino)-pyrimidine + formate + 2 phosphate + 3 H(+). It participates in cofactor biosynthesis; riboflavin biosynthesis; 5-amino-6-(D-ribitylamino)uracil from GTP: step 1/4. Functionally, catalyzes the conversion of GTP to 2,5-diamino-6-ribosylamino-4(3H)-pyrimidinone 5'-phosphate (DARP), formate and pyrophosphate. This chain is GTP cyclohydrolase-2, found in Tolumonas auensis (strain DSM 9187 / NBRC 110442 / TA 4).